The sequence spans 237 residues: Ribose-5-phosphate isomerase A (237 aa).

Substrate contacts are provided by residues 30–33 (SGST), 87–90 (DGAD), and 100–103 (KGGG). E109 serves as the catalytic Proton acceptor. Position 127 (K127) interacts with substrate.

This sequence belongs to the ribose 5-phosphate isomerase family. In terms of assembly, homodimer.

The enzyme catalyses aldehydo-D-ribose 5-phosphate = D-ribulose 5-phosphate. It participates in carbohydrate degradation; pentose phosphate pathway; D-ribose 5-phosphate from D-ribulose 5-phosphate (non-oxidative stage): step 1/1. In terms of biological role, catalyzes the reversible conversion of ribose-5-phosphate to ribulose 5-phosphate. This is Ribose-5-phosphate isomerase A from Prochlorococcus marinus (strain MIT 9211).